The primary structure comprises 517 residues: Ribonuclease Y (517 aa).

A helical transmembrane segment spans residues 4–24; the sequence is LIYIVILFVGIAAGAFFGISV. Residues 207-267 enclose the KH domain; the sequence is TISTVALPND…LRREVARRTI (61 aa). In terms of domain architecture, HD spans 333–426; sequence VLAHSVEVAQ…VAAADAISAA (94 aa).

Belongs to the RNase Y family.

The protein localises to the cell membrane. Endoribonuclease that initiates mRNA decay. This Fervidobacterium nodosum (strain ATCC 35602 / DSM 5306 / Rt17-B1) protein is Ribonuclease Y.